The primary structure comprises 739 residues: Prestin (739 aa).

Over 1–76 (MEHVTVSEEP…PILTWLPSYP (76 aa)) the chain is Cytoplasmic. Residues 77–106 (LKEYLFGDIVSGISTGVMQLPQGLAYAMLA) form a helical membrane-spanning segment. At 107 to 109 (AVP) the chain is on the extracellular side. The chain crosses the membrane as a helical span at residues 110–127 (PVFGLYSSFYPVLLYTFF). Topologically, residues 128–138 (GTSKHISIGTF) are cytoplasmic. Residues 139–152 (AVISLMIGGVAVRE) traverse the membrane as a helical segment. The Extracellular portion of the chain corresponds to 153–169 (APDSMFMVNGTNSSLVV). 2 N-linked (GlcNAc...) asparagine glycosylation sites follow: Asn-161 and Asn-164. The chain crosses the membrane as a helical span at residues 170-199 (NIEARDSRRVEVVVALTTLVGIIQFVLGLL). The Cytoplasmic segment spans residues 200–209 (RFGFLAIYLT). The helical transmembrane segment at 210 to 233 (EPLVRGFTTAAAVHVSVSQLKYLL) threads the bilayer. Residues 234–244 (GVKTARFNGPL) are Extracellular-facing. The helical intramembrane region spans 245 to 256 (SVVYSLDAVLRN). The Extracellular segment spans residues 257–261 (IADTN). The chain crosses the membrane as a helical span at residues 262–285 (IVTLIIGLGCTVFLYIIKQLNERF). Topologically, residues 286 to 294 (KKKLLIPIP) are cytoplasmic. Residues 295 to 310 (GEIIVVIVSTGISYGM) traverse the membrane as a helical segment. Residues 311-335 (LMSENYGVDVVGKIPTGLLPPKVPD) lie on the Extracellular side of the membrane. Residues 336–370 (FSVFPNLFADAVPIAVVGFSITISLAKTFALKYGY) form a helical membrane-spanning segment. The Cytoplasmic segment spans residues 371–373 (SVD). The chain crosses the membrane as a helical span at residues 374 to 391 (GNQELIALGLCNFVSSFF). Topologically, residues 392–399 (HTFVVTAS) are extracellular. Residues 400–409 (MSRSLVQEST) form a helical membrane-spanning segment. Ser-401 is a binding site for salicylate. Residues 410 to 413 (GGHT) lie on the Cytoplasmic side of the membrane. A helical membrane pass occupies residues 414-435 (EIAGLLASLLVLLVVVAIGFVF). Over 436-439 (QPLP) the chain is Extracellular. The chain crosses the membrane as a helical span at residues 440 to 467 (TTVLAAIIMVNLLGMFKQTRDIPVLWRK). Position 468 (Ser-468) is a topological domain, cytoplasmic. A helical membrane pass occupies residues 469–484 (KIELAIWLVSFFASVL). Residues 485–486 (LG) are Extracellular-facing. The chain crosses the membrane as a helical span at residues 487 to 507 (LDYGLAVAMAFAILTVIYRTQ). The extended region for STAS domain stretch occupies residues 508 to 731 (RPKNVVLGQI…AVLQCKRWRD (224 aa)). The Cytoplasmic portion of the chain corresponds to 508–739 (RPKNVVLGQI…RDLPVHPNIH (232 aa)). The STAS domain maps to 528-726 (EYEEAEECSG…PTIHDAVLQC (199 aa)).

This sequence belongs to the SLC26A/SulP transporter (TC 2.A.53) family. As to quaternary structure, homodimer. Interacts (via STAS domain) with CALM; this interaction is calcium-dependent. Expressed in hair cells of the auditory organs.

The protein localises to the cell membrane. It catalyses the reaction oxalate(in) + chloride(out) = oxalate(out) + chloride(in). The enzyme catalyses sulfate(out) + chloride(in) = sulfate(in) + chloride(out). Its activity is regulated as follows. Sulfate/chloride antiport activity is inhibited by salicylate; this inhibition is reversible. Electrogenic antiporter that exchanges sulfate or oxalate for chloride ion in a strictly coupled manner with a 1:1 stoichiometry. Adopts a dynamic conformation, which alternates between the exposure of the central binding site to the extra- and intracellular solutions leading to an inward-to-outward conformational transition during the transport cycle. Generates voltage-dependent charge movements resembling to the non-linear capacitance (NLC) of the cell membrane, but which are not associated to electromotile activity. This Danio rerio (Zebrafish) protein is Prestin.